A 383-amino-acid chain; its full sequence is Na(+)/H(+) antiporter NhaA (383 aa).

The next 11 membrane-spanning stretches (helical) occupy residues 10-30 (LIGG…NNSP), 56-76 (LMHW…GLEI), 91-111 (IITP…IYLS), 121-141 (GWAI…ALLG), 150-170 (LLVI…IAIF), 174-194 (SLSL…IICN), 206-226 (VVLG…ATLA), 254-274 (PWII…ISFS), 289-308 (IIWG…LAVF), 327-347 (GISL…VLAF), and 355-375 (AIKI…YIVL).

It belongs to the NhaA Na(+)/H(+) (TC 2.A.33) antiporter family.

It localises to the cell inner membrane. The catalysed reaction is Na(+)(in) + 2 H(+)(out) = Na(+)(out) + 2 H(+)(in). In terms of biological role, na(+)/H(+) antiporter that extrudes sodium in exchange for external protons. This Francisella tularensis subsp. holarctica (strain FTNF002-00 / FTA) protein is Na(+)/H(+) antiporter NhaA.